A 308-amino-acid polypeptide reads, in one-letter code: Elongation factor Ts (308 aa).

The tract at residues 80–83 is involved in Mg(2+) ion dislocation from EF-Tu; sequence TDFV.

It belongs to the EF-Ts family.

The protein localises to the cytoplasm. Functionally, associates with the EF-Tu.GDP complex and induces the exchange of GDP to GTP. It remains bound to the aminoacyl-tRNA.EF-Tu.GTP complex up to the GTP hydrolysis stage on the ribosome. This Rhizobium leguminosarum bv. trifolii (strain WSM2304) protein is Elongation factor Ts.